Here is a 430-residue protein sequence, read N- to C-terminus: tRNA(Ile)-lysidine synthase (430 aa).

An ATP-binding site is contributed by 27–32; that stretch reads SGGSDS.

This sequence belongs to the tRNA(Ile)-lysidine synthase family.

It is found in the cytoplasm. The enzyme catalyses cytidine(34) in tRNA(Ile2) + L-lysine + ATP = lysidine(34) in tRNA(Ile2) + AMP + diphosphate + H(+). Its function is as follows. Ligates lysine onto the cytidine present at position 34 of the AUA codon-specific tRNA(Ile) that contains the anticodon CAU, in an ATP-dependent manner. Cytidine is converted to lysidine, thus changing the amino acid specificity of the tRNA from methionine to isoleucine. This chain is tRNA(Ile)-lysidine synthase, found in Rickettsia bellii (strain OSU 85-389).